Here is a 467-residue protein sequence, read N- to C-terminus: Inactive pancreatic lipase-related protein 1 (467 aa).

The first 17 residues, 1-17 (MLIFWTITLFLLGAAKG), serve as a signal peptide directing secretion. Disulfide bonds link cysteine 21–cysteine 27 and cysteine 109–cysteine 120. The Nucleophile role is filled by serine 171. Aspartate 194 (charge relay system) is an active-site residue. Ca(2+) is bound by residues glutamate 205, arginine 208, aspartate 210, and aspartate 213. Cysteine 255 and cysteine 279 are disulfide-bonded. Histidine 281 serves as the catalytic Charge relay system. Disulfide bonds link cysteine 303–cysteine 314, cysteine 317–cysteine 322, and cysteine 451–cysteine 467. Positions 356–467 (WRYGVSITLS…EDTLLTLTPC (112 aa)) constitute a PLAT domain.

Belongs to the AB hydrolase superfamily. Lipase family. Pancreas.

It is found in the secreted. Its function is as follows. May function as inhibitor of dietary triglyceride digestion. Lacks detectable lipase activity towards triglycerides, diglycerides, phosphatidylcholine, galactolipids or cholesterol esters (in vitro). This is Inactive pancreatic lipase-related protein 1 (PNLIPRP1) from Homo sapiens (Human).